A 155-amino-acid polypeptide reads, in one-letter code: Large ribosomal subunit protein uL13 (155 aa).

The protein belongs to the universal ribosomal protein uL13 family. Part of the 50S ribosomal subunit.

This protein is one of the early assembly proteins of the 50S ribosomal subunit, although it is not seen to bind rRNA by itself. It is important during the early stages of 50S assembly. The sequence is that of Large ribosomal subunit protein uL13 from Rickettsia typhi (strain ATCC VR-144 / Wilmington).